Here is an 83-residue protein sequence, read N- to C-terminus: MVCLPCIFLPIMMAIYMKFIMPYVYRFLPERWVHFLDPILYPTCPMKIPEQEKKEEEEEKEKSCCSTEAENTTEVTTETKKDQ.

The interval Q51–Q83 is disordered. Over residues T67 to T76 the composition is skewed to low complexity.

Belongs to the UPF0729 family.

This is UPF0729 protein CBG02799 from Caenorhabditis briggsae.